The following is a 177-amino-acid chain: Large ribosomal subunit protein uL5 (177 aa).

The protein belongs to the universal ribosomal protein uL5 family. Part of the 50S ribosomal subunit; part of the 5S rRNA/L5/L18/L25 subcomplex. Contacts the 5S rRNA and the P site tRNA. Forms a bridge to the 30S subunit in the 70S ribosome.

Functionally, this is one of the proteins that bind and probably mediate the attachment of the 5S RNA into the large ribosomal subunit, where it forms part of the central protuberance. In the 70S ribosome it contacts protein S13 of the 30S subunit (bridge B1b), connecting the 2 subunits; this bridge is implicated in subunit movement. Contacts the P site tRNA; the 5S rRNA and some of its associated proteins might help stabilize positioning of ribosome-bound tRNAs. The sequence is that of Large ribosomal subunit protein uL5 from Ehrlichia chaffeensis (strain ATCC CRL-10679 / Arkansas).